The chain runs to 219 residues: Interleukin-6 (219 aa).

The N-terminal stretch at Met-1–Gly-20 is a signal peptide. Cys-103 and Cys-111 are joined by a disulfide.

The protein belongs to the IL-6 superfamily. In terms of assembly, component of a hexamer of two molecules each of IL6, IL6R and IL6ST; first binds to IL6R to associate with the signaling subunit IL6ST. In terms of tissue distribution, expressed in spleen, gill and gastrointestinal tract, ovary and brain. Highest expression in ovary.

The protein localises to the secreted. Cytokine with a wide variety of biological functions in immunity, tissue regeneration, and metabolism. Binds to IL6R, then the complex associates to the signaling subunit IL6ST/gp130 to trigger the intracellular IL6-signaling pathway. The interaction with the membrane-bound IL6R and IL6ST stimulates 'classic signaling', whereas the binding of IL6 and soluble IL6R to IL6ST stimulates 'trans-signaling'. Alternatively, 'cluster signaling' occurs when membrane-bound IL6:IL6R complexes on transmitter cells activate IL6ST receptors on neighboring receiver cells. This Oncorhynchus mykiss (Rainbow trout) protein is Interleukin-6 (il6).